The sequence spans 85 residues: Sugar transporter SemiSWEET (85 aa).

The region spanning 2 to 59 (ENLIGYVAAFLTTVSFLPQVLRVVMTKQTRDISRNMYIMFFLGVVLWFVYGILRSDLP) is the PQ-loop domain. 3 helical membrane-spanning segments follow: residues 5-25 (IGYV…LRVV), 33-53 (ISRN…VYGI), and 57-77 (DLPI…ILYY).

Homodimer.

The protein localises to the cell membrane. The homodimer mediates transmembrane sugar transport down a concentration gradient. Transport is probably effected by rocking-type movements, where a cargo-binding cavity opens first on one and then on the other side of the membrane. The protein is Sugar transporter SemiSWEET of Leptospira biflexa serovar Patoc (strain Patoc 1 / ATCC 23582 / Paris).